A 132-amino-acid polypeptide reads, in one-letter code: Phosphoribosyl-ATP pyrophosphatase (132 aa).

It belongs to the PRA-PH family.

The protein resides in the cytoplasm. It catalyses the reaction 1-(5-phospho-beta-D-ribosyl)-ATP + H2O = 1-(5-phospho-beta-D-ribosyl)-5'-AMP + diphosphate + H(+). It functions in the pathway amino-acid biosynthesis; L-histidine biosynthesis; L-histidine from 5-phospho-alpha-D-ribose 1-diphosphate: step 2/9. This Acidovorax sp. (strain JS42) protein is Phosphoribosyl-ATP pyrophosphatase.